The sequence spans 235 residues: Endonuclease V (235 aa).

The Mg(2+) site is built by Asp-47 and Asp-117.

Belongs to the endonuclease V family. It depends on Mg(2+) as a cofactor.

Its subcellular location is the cytoplasm. The catalysed reaction is Endonucleolytic cleavage at apurinic or apyrimidinic sites to products with a 5'-phosphate.. Functionally, DNA repair enzyme involved in the repair of deaminated bases. Selectively cleaves double-stranded DNA at the second phosphodiester bond 3' to a deoxyinosine leaving behind the intact lesion on the nicked DNA. This chain is Endonuclease V, found in Protochlamydia amoebophila (strain UWE25).